The chain runs to 429 residues: Probable M18 family aminopeptidase 2 (429 aa).

Residues His-82, His-156, and His-401 each coordinate Zn(2+).

Belongs to the peptidase M18 family. Zn(2+) is required as a cofactor.

This is Probable M18 family aminopeptidase 2 from Pseudomonas entomophila (strain L48).